A 290-amino-acid chain; its full sequence is 4-diphosphocytidyl-2-C-methyl-D-erythritol kinase (290 aa).

Lys-10 is a catalytic residue. Residue Pro-96–Ser-106 coordinates ATP. Residue Asp-138 is part of the active site.

The protein belongs to the GHMP kinase family. IspE subfamily.

It carries out the reaction 4-CDP-2-C-methyl-D-erythritol + ATP = 4-CDP-2-C-methyl-D-erythritol 2-phosphate + ADP + H(+). It functions in the pathway isoprenoid biosynthesis; isopentenyl diphosphate biosynthesis via DXP pathway; isopentenyl diphosphate from 1-deoxy-D-xylulose 5-phosphate: step 3/6. In terms of biological role, catalyzes the phosphorylation of the position 2 hydroxy group of 4-diphosphocytidyl-2C-methyl-D-erythritol. This is 4-diphosphocytidyl-2-C-methyl-D-erythritol kinase from Caulobacter vibrioides (strain NA1000 / CB15N) (Caulobacter crescentus).